Consider the following 626-residue polypeptide: Chaperone protein DnaK (626 aa).

Threonine 197 bears the Phosphothreonine; by autocatalysis mark. 2 stretches are compositionally biased toward basic and acidic residues: residues 512–528 (DAEA…EAVE) and 539–551 (QTEK…GEKI). Disordered stretches follow at residues 512 to 551 (DAEA…GEKI) and 601 to 626 (DQNA…AEVE).

The protein belongs to the heat shock protein 70 family.

Acts as a chaperone. The polypeptide is Chaperone protein DnaK (Campylobacter fetus subsp. fetus (strain 82-40)).